We begin with the raw amino-acid sequence, 94 residues long: Pyrimidine/purine nucleoside phosphorylase (94 aa).

Belongs to the nucleoside phosphorylase PpnP family.

It carries out the reaction a purine D-ribonucleoside + phosphate = a purine nucleobase + alpha-D-ribose 1-phosphate. The enzyme catalyses adenosine + phosphate = alpha-D-ribose 1-phosphate + adenine. It catalyses the reaction cytidine + phosphate = cytosine + alpha-D-ribose 1-phosphate. The catalysed reaction is guanosine + phosphate = alpha-D-ribose 1-phosphate + guanine. It carries out the reaction inosine + phosphate = alpha-D-ribose 1-phosphate + hypoxanthine. The enzyme catalyses thymidine + phosphate = 2-deoxy-alpha-D-ribose 1-phosphate + thymine. It catalyses the reaction uridine + phosphate = alpha-D-ribose 1-phosphate + uracil. The catalysed reaction is xanthosine + phosphate = alpha-D-ribose 1-phosphate + xanthine. Functionally, catalyzes the phosphorolysis of diverse nucleosides, yielding D-ribose 1-phosphate and the respective free bases. Can use uridine, adenosine, guanosine, cytidine, thymidine, inosine and xanthosine as substrates. Also catalyzes the reverse reactions. This is Pyrimidine/purine nucleoside phosphorylase from Cronobacter sakazakii (strain ATCC BAA-894) (Enterobacter sakazakii).